Reading from the N-terminus, the 454-residue chain is MEKGMVAMNEWIEKSKTYLWLPFTQMKDYEQHPLVIESGEGIFLTDVNGKTYYDGYSSLWLNVHGHRKKEIDDAIRAQLERIAHSTLLGAANIPAIALAEKLIEWTPSHLTRVFYSDSGAEAVEIALKIAFQYWRNIGENKKQKFVTLANGYHGDTVGAISVGAIDIFHTVYEPLMFTSYKAPFPLVYRHPSNDPNVVRDEALGALEALFAEHHEEIAAMIVEGMIQGAGGMHVMPKGYLKGVEQLCRQYNILFIVDEVATGFGRTGKRFAIEHEDVQPDIMTVAKGITGGYLPIAATLTTEAIYEAFYGDYTEFKTFFHGHSYTGNQLGCAAALANIQIFERERLIEQIQQKATFVAEQLASFNELNHVGDVRQLGLMCGIELVRDRRTHEPYPWTERMGYRTTLTMREKGMLTRPLGDVIVFMPPLASTFEQLEAMIAMMKEAIIETTEKRG.

119-120 (GA) serves as a coordination point for pyridoxal 5'-phosphate. Residue Tyr-152 participates in substrate binding. Asp-257 provides a ligand contact to pyridoxal 5'-phosphate. Positions 286, 321, and 416 each coordinate substrate. Residue Lys-286 is modified to N6-(pyridoxal phosphate)lysine.

It belongs to the class-III pyridoxal-phosphate-dependent aminotransferase family. BioA subfamily. As to quaternary structure, homodimer. Pyridoxal 5'-phosphate is required as a cofactor.

Its subcellular location is the cytoplasm. The catalysed reaction is (8S)-8-amino-7-oxononanoate + S-adenosyl-L-methionine = S-adenosyl-4-methylsulfanyl-2-oxobutanoate + (7R,8S)-7,8-diammoniononanoate. It functions in the pathway cofactor biosynthesis; biotin biosynthesis; 7,8-diaminononanoate from 8-amino-7-oxononanoate (SAM route): step 1/1. In terms of biological role, catalyzes the transfer of the alpha-amino group from S-adenosyl-L-methionine (SAM) to 7-keto-8-aminopelargonic acid (KAPA) to form 7,8-diaminopelargonic acid (DAPA). It is the only aminotransferase known to utilize SAM as an amino donor. In Anoxybacillus flavithermus (strain DSM 21510 / WK1), this protein is Adenosylmethionine-8-amino-7-oxononanoate aminotransferase.